The primary structure comprises 313 residues: Ribosomal RNA small subunit methyltransferase H (313 aa).

S-adenosyl-L-methionine contacts are provided by residues 51–53, D71, F98, D119, and Q126; that span reads GGH. The tract at residues 293 to 313 is disordered; that stretch reads EEQRANPRSRSARLRVAERVS.

The protein belongs to the methyltransferase superfamily. RsmH family.

It is found in the cytoplasm. It carries out the reaction cytidine(1402) in 16S rRNA + S-adenosyl-L-methionine = N(4)-methylcytidine(1402) in 16S rRNA + S-adenosyl-L-homocysteine + H(+). Functionally, specifically methylates the N4 position of cytidine in position 1402 (C1402) of 16S rRNA. The protein is Ribosomal RNA small subunit methyltransferase H of Roseiflexus sp. (strain RS-1).